A 258-amino-acid chain; its full sequence is UDP-N-acetylenolpyruvoylglucosamine reductase (258 aa).

Arg142 is an active-site residue. Ser184 functions as the Proton donor in the catalytic mechanism. Residue Glu254 is part of the active site.

It belongs to the MurB family. FAD serves as cofactor.

The protein resides in the cytoplasm. The enzyme catalyses UDP-N-acetyl-alpha-D-muramate + NADP(+) = UDP-N-acetyl-3-O-(1-carboxyvinyl)-alpha-D-glucosamine + NADPH + H(+). It participates in cell wall biogenesis; peptidoglycan biosynthesis. Cell wall formation. The protein is UDP-N-acetylenolpyruvoylglucosamine reductase of Campylobacter jejuni (strain RM1221).